A 1248-amino-acid polypeptide reads, in one-letter code: Structural polyprotein (1248 aa).

Over residues 1–10 the composition is skewed to polar residues; it reads MEFIPTQTFY. Positions 1–104 are disordered; it reads MEFIPTQTFY…KKKKPGRRER (104 aa). The host transcription inhibition stretch occupies residues 36–68; that stretch reads RKAGQLAQLISAVNKLTMRAVPQQKPRKNRKNK. Residues 60–72 are compositionally biased toward basic residues; it reads KPRKNRKNKKQKQ. Positions 61–99 match the Nuclear localization signal motif; the sequence is PRKNRKNKKQKQKQQAPRNNMNQKKQPPKKKPAQKKKKP. The span at 73–85 shows a compositional bias: low complexity; the sequence is KQQAPRNNMNQKK. The segment at 84-114 is binding to the viral RNA; the sequence is KKQPPKKKPAQKKKKPGRRERMCMKIENDCI. Residues 86–101 are compositionally biased toward basic residues; the sequence is QPPKKKPAQKKKKPGR. The tract at residues 99 to 113 is ribosome-binding; sequence PGRRERMCMKIENDC. A disulfide bond links C113 and C128. In terms of domain architecture, Peptidase S3 spans 113–261; it reads CIFEVKHEGK…KITPEGAEEW (149 aa). H139 serves as the catalytic Charge relay system. The Nuclear export signal signature appears at 144–154; that stretch reads IDNADLAKLAF. The interval 155-160 is interaction with spike glycoprotein E2; it reads KRSSKY. D161 acts as the Charge relay system in catalysis. The interval 183–193 is dimerization of the capsid protein; it reads PEGYYNWHHGA. S213 serves as the catalytic Charge relay system. Positions 219-223 are dimerization of the capsid protein; it reads DNKGR. A functions as an uncleaved signal peptide for the precursor of protein E3/E2 region spans residues 262 to 274; it reads SLAIPVMCLLANT. At 262–692 the chain is on the extracellular side; it reads SLAIPVMCLL…YYYELYPTMT (431 aa). Cystine bridges form between C269-C278, C283-C287, C286-C318, C344-C450, C347-C353, C416-C430, C478-C591, C526-C550, and C528-C545. An N-linked (GlcNAc...) asparagine; by host glycan is attached at N273. Interaction with host Mxra8 receptor regions lie at residues 351–354 and 387–389; these read HSCH and HDW. Interaction with host Mxra8 receptor regions lie at residues 509–512 and 541–547; these read QSGN and VINNCKV. 2 N-linked (GlcNAc...) asparagine; by host glycosylation sites follow: N588 and N670. A helical transmembrane segment spans residues 693–713; that stretch reads VVVVSVASFVLLSMVGVAVGM. Topologically, residues 714–748 are cytoplasmic; sequence CMCARRRCITPYELTPGATVPFLLSLICCIRTAKA. The tract at residues 716–720 is interaction with the capsid protein; it reads CARRR. 3 S-palmitoyl cysteine; by host lipidation sites follow: C721, C741, and C742. The segment at 721 to 741 is transient transmembrane before p62-6K protein processing; that stretch reads CITPYELTPGATVPFLLSLIC. The cysteines at positions 721 and 742 are disulfide-linked. The Extracellular segment spans residues 749-763; sequence ATYQEAAVYLWNEQQ. A helical membrane pass occupies residues 764–784; that stretch reads PLFWLQAIIPLAALIVLCNCL. The Cytoplasmic segment spans residues 785-795; that stretch reads RLLPCCCKTLT. A helical transmembrane segment spans residues 796–816; the sequence is FLAVMSVGAHTVSAYEHVTVI. Topologically, residues 817-1224 are extracellular; the sequence is PNTVGVPYKT…AMSWVQKITG (408 aa). 3 disulfide bridges follow: C858-C923, C871-C903, and C877-C887. Residues 893 to 910 form an E1 fusion peptide loop region; that stretch reads VYPFMWGGAYCFCDTENT. N950 and N1079 each carry an N-linked (GlcNAc...) asparagine; by host glycan. 4 disulfide bridges follow: C1068–C1080, C1110–C1185, C1115–C1189, and C1137–C1179. The helical transmembrane segment at 1225–1245 threads the bilayer; sequence GVGLVVAVAALILIVVLCVSF. C1242 carries the S-palmitoyl cysteine; by host lipid modification. Residues 1246–1248 lie on the Cytoplasmic side of the membrane; sequence SRH.

As to quaternary structure, homodimer. Homomultimer. Interacts with host karyopherin KPNA4; this interaction allows the nuclear import of the viral capsid protein. Interacts with spike glycoprotein E2. Interacts with host IRAK1; the interaction leads to inhibition of IRAK1-dependent signaling. The precursor of protein E3/E2 and E1 form a heterodimer shortly after synthesis. In terms of assembly, interacts with spike glycoprotein E2. The precursor of protein E3/E2 and E1 form a heterodimer shortly after synthesis. Processing of the precursor of protein E3/E2 into E2 and E3 results in a heterodimer of the spike glycoproteins E2 and E1. Spike at virion surface are constituted of three E2-E1 heterodimers. After target cell attachment and endocytosis, E1 change conformation to form homotrimers. Interacts with 6K protein. Interacts with host MXRA8; this interaction mediates virus entry. The interaction involves 2 adjacent E2-E1 heterodimers. As to quaternary structure, interacts with spike glycoprotein E1. Processing of the precursor of protein E3/E2 into E2 and E3 results in a heterodimer of the spike glycoproteins E2 and E1. Spike at virion surface are constituted of a trimer of E2-E1 heterodimers. Interacts with 6K protein. Interacts with host MXRA8; this interaction mediates virus entry. The interaction involves 2 adjacent E2-E1 heterodimers. Oligomer. Interacts with spike glycoprotein E1. Interacts with spike glycoprotein E2. Structural polyprotein: Specific enzymatic cleavages in vivo yield mature proteins. Capsid protein is auto-cleaved during polyprotein translation, unmasking a signal peptide at the N-terminus of the precursor of E3/E2. The remaining polyprotein is then targeted to the host endoplasmic reticulum, where host signal peptidase cleaves it into pE2, 6K and E1 proteins. pE2 is further processed to mature E3 and E2 by host furin in trans-Golgi vesicle. In terms of processing, palmitoylated via thioester bonds. These palmitoylations may induce disruption of the C-terminus transmembrane. This would result in the reorientation of E2 C-terminus from lumenal to cytoplasmic side. Post-translationally, N-glycosylated. Palmitoylated via thioester bonds.

The protein localises to the virion. Its subcellular location is the host cytoplasm. It is found in the host cell membrane. It localises to the host nucleus. The protein resides in the virion membrane. The protein localises to the host Golgi apparatus. Its subcellular location is the host trans-Golgi network. It is found in the host endoplasmic reticulum. The enzyme catalyses Autocatalytic release of the core protein from the N-terminus of the togavirus structural polyprotein by hydrolysis of a -Trp-|-Ser- bond.. Its function is as follows. Forms an icosahedral capsid with a T=4 symmetry composed of 240 copies of the capsid protein surrounded by a lipid membrane through which penetrate 80 spikes composed of trimers of E1-E2 heterodimers. The capsid protein binds to the viral RNA genome at a site adjacent to a ribosome binding site for viral genome translation following genome release. Possesses a protease activity that results in its autocatalytic cleavage from the nascent structural protein. Following its self-cleavage, the capsid protein transiently associates with ribosomes, and within several minutes the protein binds to viral RNA and rapidly assembles into icosahedric core particles. The resulting nucleocapsid eventually associates with the cytoplasmic domain of the spike glycoprotein E2 at the cell membrane, leading to budding and formation of mature virions. In case of infection, new virions attach to target cells and after clathrin-mediated endocytosis their membrane fuses with the host endosomal membrane. This leads to the release of the nucleocapsid into the cytoplasm, followed by an uncoating event necessary for the genomic RNA to become accessible. The uncoating might be triggered by the interaction of capsid proteins with ribosomes. Binding of ribosomes would release the genomic RNA since the same region is genomic RNA-binding and ribosome-binding. Specifically inhibits interleukin-1 receptor-associated kinase 1/IRAK1-dependent signaling during viral entry, representing a means by which the alphaviruses may evade innate immune detection and activation prior to viral gene expression. Degrades host cyclic GMP-AMP synthase (CGAS) thereby inhibiting the cGAS-STING pathway. Provides the signal sequence for the translocation of the precursor of protein E3/E2 to the host endoplasmic reticulum. Furin-cleaved E3 remains associated with spike glycoprotein E1 and mediates pH protection of the latter during the transport via the secretory pathway. After virion release from the host cell, the assembly protein E3 is gradually released in the extracellular space. In terms of biological role, plays a role in viral attachment to target host cell, by binding to the cell receptor MXRA8. Synthesized as a p62 precursor which is processed by furin at the cell membrane just before virion budding, giving rise to E2-E1 heterodimer. The p62-E1 heterodimer is stable, whereas E2-E1 is unstable and dissociate at low pH. p62 is processed at the last step, presumably to avoid E1 fusion activation before its final export to cell surface. E2 C-terminus contains a transitory transmembrane that would be disrupted by palmitoylation, resulting in reorientation of the C-terminal tail from lumenal to cytoplasmic side. This step is critical since E2 C-terminus is involved in budding by interacting with capsid proteins. This release of E2 C-terminus in cytoplasm occurs lately in protein export, and precludes premature assembly of particles at the endoplasmic reticulum membrane. Functionally, acts as a viroporin that participates in virus glycoprotein processing and transport to the plasma membrane, cell permeabilization and budding of viral particles. Disrupts the calcium homeostasis of the cell, probably at the endoplasmic reticulum level. This leads to cytoplasmic calcium elevation. Because of its lipophilic properties, the 6K protein is postulated to influence the selection of lipids that interact with the transmembrane domains of the glycoproteins, which, in turn, affects the deformability of the bilayer required for the extreme curvature that occurs as budding proceeds. Present in low amount in virions, about 3% compared to viral glycoproteins. Its function is as follows. Class II viral fusion protein. Fusion activity is inactive as long as E1 is bound to E2 in mature virion. After virus attachment to target cell via host MXRA8 and endocytosis, acidification of the endosome induce dissociation of E1/E2 heterodimer and concomitant trimerization of the E1 subunits. This E1 trimer is fusion active, and promotes release of viral nucleocapsid in cytoplasm after endosome and viral membrane fusion. Efficient fusion requires the presence of cholesterol and sphingolipid in the target membrane. This chain is Structural polyprotein, found in Chikungunya virus (strain Nagpur) (CHIKV).